A 197-amino-acid chain; its full sequence is dITP/XTP pyrophosphatase (197 aa).

Substrate is bound at residue 8 to 13 (TGNAGK). Residues Glu-40 and Asp-69 each coordinate Mg(2+). Residue Asp-69 is the Proton acceptor of the active site. Substrate-binding positions include Ser-70, 154–157 (FGYD), Lys-177, and 182–183 (HR).

This sequence belongs to the HAM1 NTPase family. As to quaternary structure, homodimer. It depends on Mg(2+) as a cofactor.

The enzyme catalyses XTP + H2O = XMP + diphosphate + H(+). The catalysed reaction is dITP + H2O = dIMP + diphosphate + H(+). It carries out the reaction ITP + H2O = IMP + diphosphate + H(+). Functionally, pyrophosphatase that catalyzes the hydrolysis of nucleoside triphosphates to their monophosphate derivatives, with a high preference for the non-canonical purine nucleotides XTP (xanthosine triphosphate), dITP (deoxyinosine triphosphate) and ITP. Seems to function as a house-cleaning enzyme that removes non-canonical purine nucleotides from the nucleotide pool, thus preventing their incorporation into DNA/RNA and avoiding chromosomal lesions. The sequence is that of dITP/XTP pyrophosphatase (rdgB) from Shigella flexneri.